The sequence spans 1096 residues: Pentatricopeptide repeat-containing protein At5g55840 (1096 aa).

PPR repeat units lie at residues 122-156 (NPSVYDILIRVYLREGMIQDSLEIFRLMGLYGFNP), 157-191 (SVYTCNAILGSVVKSGEDVSVWSFLKEMLKRKICP), 192-226 (DVATFNILINVLCAEGSFEKSSYLMQKMEKSGYAP), 227-261 (TIVTYNTVLHWYCKKGRFKAAIELLDHMKSKGVDA), 262-296 (DVCTYNMLIHDLCRSNRIAKGYLLLRDMRKRMIHP), 297-331 (NEVTYNTLINGFSNEGKVLIASQLLNEMLSFGLSP), 332-366 (NHVTFNALIDGHISEGNFKEALKMFYMMEAKGLTP), 367-401 (SEVSYGVLLDGLCKNAEFDLARGFYMRMKRNGVCV), 402-436 (GRITYTGMIDGLCKNGFLDEAVVLLNEMSKDGIDP), 437-471 (DIVTYSALINGFCKVGRFKTAKEIVCRIYRVGLSP), 472-506 (NGIIYSTLIYNCCRMGCLKEAIRIYEAMILEGHTR), 507-541 (DHFTFNVLVTSLCKAGKVAEAEEFMRCMTSDGILP), 542-576 (NTVSFDCLINGYGNSGEGLKAFSVFDEMTKVGHHP), 577-607 (TFFTYGSLLKGLCKGGHLREAEKFLKSLHAV), 612-646 (DTVMYNTLLTAMCKSGNLAKAVSLFGEMVQRSILP), 647-681 (DSYTYTSLISGLCRKGKTVIAILFAKEAEARGNVL), 683-717 (NKVMYTCFVDGMFKAGQWKAGIYFREQMDNLGHTP), 718-752 (DIVTTNAMIDGYSRMGKIEKTNDLLPEMGNQNGGP), 753-787 (NLTTYNILLHGYSKRKDVSTSFLLYRSIILNGILP), 788-822 (DKLTCHSLVLGICESNMLEIGLKILKAFICRGVEV), 823-857 (DRYTFNMLISKCCANGEINWAFDLVKVMTSLGISL), 858-892 (DKDTCDAMVSVLNRNHRFQESRMVLHEMSKQGISP), 893-927 (ESRKYIGLINGLCRVGDIKTAFVVKEEMIAHKICP), 928-962 (PNVAESAMVRALAKCGKADEATLLLRFMLKMKLVP), 963-997 (TIASFTTLMHLCCKNGNVIEALELRVVMSNCGLKL), 998-1032 (DLVSYNVLITGLCAKGDMALAFELYEEMKGDGFLA), and 1033-1068 (NATTYKALIRGLLARETAFSGADIILKDLLARGFIT).

Belongs to the PPR family. P subfamily.

This chain is Pentatricopeptide repeat-containing protein At5g55840, found in Arabidopsis thaliana (Mouse-ear cress).